The chain runs to 600 residues: Elongation factor 4 (600 aa).

The tr-type G domain occupies 5–187 (KYIRNFSIIA…AIVNKLPPPK (183 aa)). Residues 17-22 (DHGKST) and 134-137 (NKLD) each bind GTP.

It belongs to the TRAFAC class translation factor GTPase superfamily. Classic translation factor GTPase family. LepA subfamily.

It localises to the cell inner membrane. The enzyme catalyses GTP + H2O = GDP + phosphate + H(+). Its function is as follows. Required for accurate and efficient protein synthesis under certain stress conditions. May act as a fidelity factor of the translation reaction, by catalyzing a one-codon backward translocation of tRNAs on improperly translocated ribosomes. Back-translocation proceeds from a post-translocation (POST) complex to a pre-translocation (PRE) complex, thus giving elongation factor G a second chance to translocate the tRNAs correctly. Binds to ribosomes in a GTP-dependent manner. The sequence is that of Elongation factor 4 from Rickettsia africae (strain ESF-5).